Reading from the N-terminus, the 169-residue chain is Interleukin-36 gamma (169 aa).

Residues 1 to 17 (MRGTPGDADGGGRAVYQ) constitute a propeptide that is removed on maturation.

The protein belongs to the IL-1 family. In terms of assembly, interacts with cargo receptor TMED10; the interaction mediates the translocation from the cytoplasm into the ERGIC (endoplasmic reticulum-Golgi intermediate compartment) and thereby secretion. In terms of processing, N-terminal truncation leads to a dramatic enhancement of its activity (&gt;1000-fold). Proteolytically cleaved by cathepsin CTSG. In terms of tissue distribution, highly expressed in tissues containing epithelial cells: skin, lung, stomach and esophagus. Expressed in bronchial epithelial. In skin is expressed only in keratinocytes but not in fibroblasts, endothelial cells or melanocytes. Up-regulated in lesional psoriasis skin. Expressed in monocyte-derived dendritic cells and M1 macrophages.

The protein localises to the cytoplasm. It localises to the secreted. Cytokine that binds to and signals through the IL1RL2/IL-36R receptor which in turn activates NF-kappa-B and MAPK signaling pathways in target cells. Part of the IL-36 signaling system that is thought to be present in epithelial barriers and to take part in local inflammatory response; similar to the IL-1 system with which it shares the coreceptor IL1RAP. Seems to be involved in skin inflammatory response by acting on keratinocytes, dendritic cells and indirectly on T-cells to drive tissue infiltration, cell maturation and cell proliferation. In cultured keratinocytes induces the expression of macrophage, T-cell, and neutrophil chemokines, such as CCL3, CCL4, CCL5, CCL2, CCL17, CCL22, CL20, CCL5, CCL2, CCL17, CCL22, CXCL8, CCL20 and CXCL1; also stimulates its own expression and that of the prototypic cutaneous pro-inflammatory parameters TNF-alpha, S100A7/psoriasin and inducible NOS. May play a role in pro-inflammatory responses during particular neutrophilic airway inflammation: activates mitogen-activated protein kinases and NF-kappa B in primary lung fibroblasts, and stimulates the expression of IL-8 and CXCL3 and Th17 chemokine CCL20 in lung fibroblasts. May be involved in the innate immune response to fungal pathogens, such as Aspergillus fumigatus. The chain is Interleukin-36 gamma from Homo sapiens (Human).